Consider the following 306-residue polypeptide: Secreted RxLR effector protein 76 (306 aa).

Residues 1–21 (MSGAFYVFTALLLVASDQIAA) form the signal peptide. The RxLR-dEER signature appears at 48–65 (RFLRGSRDEPDNLANEER). Residues 105 to 142 (AAKAVKKRPRGAKAGRKMPRAAEAEAVKKVPRAGTAVK) form a disordered region. Residues 107–123 (KAVKKRPRGAKAGRKMP) are compositionally biased toward basic residues.

This sequence belongs to the RxLR effector family.

The protein resides in the secreted. It localises to the host nucleus. In terms of biological role, secreted effector that partially suppresses the host cell death induced by cell death-inducing proteins. The polypeptide is Secreted RxLR effector protein 76 (Plasmopara viticola (Downy mildew of grapevine)).